Here is a 348-residue protein sequence, read N- to C-terminus: Holliday junction branch migration complex subunit RuvB (348 aa).

Positions 1-20 are disordered; the sequence is MKPPARMVSPERRSDDVGDT. Positions 1–183 are large ATPase domain (RuvB-L); that stretch reads MKPPARMVSP…FGIPIRLNFY (183 aa). ATP is bound by residues L22, R23, G64, K67, T68, T69, 130 to 132, R173, Y183, and R220; that span reads EDF. T68 is a Mg(2+) binding site. A small ATPAse domain (RuvB-S) region spans residues 184-254; that stretch reads TVEELEGIVT…IADHALSALE (71 aa). The tract at residues 257 to 348 is head domain (RuvB-H); it reads AAGLDAMDRR…FGLFGSEDDA (92 aa). DNA is bound by residues R293, R312, and R317.

This sequence belongs to the RuvB family. Homohexamer. Forms an RuvA(8)-RuvB(12)-Holliday junction (HJ) complex. HJ DNA is sandwiched between 2 RuvA tetramers; dsDNA enters through RuvA and exits via RuvB. An RuvB hexamer assembles on each DNA strand where it exits the tetramer. Each RuvB hexamer is contacted by two RuvA subunits (via domain III) on 2 adjacent RuvB subunits; this complex drives branch migration. In the full resolvosome a probable DNA-RuvA(4)-RuvB(12)-RuvC(2) complex forms which resolves the HJ.

It localises to the cytoplasm. The catalysed reaction is ATP + H2O = ADP + phosphate + H(+). Functionally, the RuvA-RuvB-RuvC complex processes Holliday junction (HJ) DNA during genetic recombination and DNA repair, while the RuvA-RuvB complex plays an important role in the rescue of blocked DNA replication forks via replication fork reversal (RFR). RuvA specifically binds to HJ cruciform DNA, conferring on it an open structure. The RuvB hexamer acts as an ATP-dependent pump, pulling dsDNA into and through the RuvAB complex. RuvB forms 2 homohexamers on either side of HJ DNA bound by 1 or 2 RuvA tetramers; 4 subunits per hexamer contact DNA at a time. Coordinated motions by a converter formed by DNA-disengaged RuvB subunits stimulates ATP hydrolysis and nucleotide exchange. Immobilization of the converter enables RuvB to convert the ATP-contained energy into a lever motion, pulling 2 nucleotides of DNA out of the RuvA tetramer per ATP hydrolyzed, thus driving DNA branch migration. The RuvB motors rotate together with the DNA substrate, which together with the progressing nucleotide cycle form the mechanistic basis for DNA recombination by continuous HJ branch migration. Branch migration allows RuvC to scan DNA until it finds its consensus sequence, where it cleaves and resolves cruciform DNA. This Bradyrhizobium sp. (strain BTAi1 / ATCC BAA-1182) protein is Holliday junction branch migration complex subunit RuvB.